The sequence spans 302 residues: DDRGK domain-containing protein 1 (302 aa).

A helical transmembrane segment spans residues 1 to 21; sequence MDPLLLGSVGVLVLAVTLIIW. At 22–302 the chain is on the cytoplasmic side; the sequence is RLLKLQWDEK…IRLETPSAAE (281 aa). Residues 101-178 form a disordered region; sequence EYDEDGKKIG…EREEKERKEH (78 aa). A compositionally biased stretch (basic and acidic residues) spans 118–178; sequence QAKEEKRQMR…EREEKERKEH (61 aa).

The protein belongs to the DDRGK1 family.

It is found in the endoplasmic reticulum membrane. Its function is as follows. Substrate adapter for ufmylation, the covalent attachment of the ubiquitin-like modifier ufm-1 to substrate proteins. This Caenorhabditis elegans protein is DDRGK domain-containing protein 1.